Reading from the N-terminus, the 284-residue chain is 4-hydroxybenzoate octaprenyltransferase (284 aa).

The next 8 helical transmembrane spans lie at 16–36 (PIGI…ASDG), 40–60 (WTLL…GCAI), 91–111 (LLVA…LNTL), 132–152 (FFAI…PMGF), 157–177 (NTVP…AVAY), 206–226 (VAAV…VGWQ), 231–251 (TWFA…YTLI), and 259–279 (CFAA…GVVL).

This sequence belongs to the UbiA prenyltransferase family. Requires Mg(2+) as cofactor.

The protein resides in the cell inner membrane. The catalysed reaction is all-trans-octaprenyl diphosphate + 4-hydroxybenzoate = 4-hydroxy-3-(all-trans-octaprenyl)benzoate + diphosphate. Its pathway is cofactor biosynthesis; ubiquinone biosynthesis. Catalyzes the prenylation of para-hydroxybenzoate (PHB) with an all-trans polyprenyl group. Mediates the second step in the final reaction sequence of ubiquinone-8 (UQ-8) biosynthesis, which is the condensation of the polyisoprenoid side chain with PHB, generating the first membrane-bound Q intermediate 3-octaprenyl-4-hydroxybenzoate. The sequence is that of 4-hydroxybenzoate octaprenyltransferase from Herminiimonas arsenicoxydans.